The sequence spans 264 residues: Diphthine synthase (264 aa).

S-adenosyl-L-methionine is bound by residues Leu-10, Asp-87, Val-90, 115–116 (SI), Leu-166, Ala-209, and His-234.

It belongs to the diphthine synthase family. Homodimer.

The catalysed reaction is 2-[(3S)-amino-3-carboxypropyl]-L-histidyl-[translation elongation factor 2] + 3 S-adenosyl-L-methionine = diphthine-[translation elongation factor 2] + 3 S-adenosyl-L-homocysteine + 3 H(+). The protein operates within protein modification; peptidyl-diphthamide biosynthesis. In terms of biological role, S-adenosyl-L-methionine-dependent methyltransferase that catalyzes the trimethylation of the amino group of the modified target histidine residue in translation elongation factor 2 (EF-2), to form an intermediate called diphthine. The three successive methylation reactions represent the second step of diphthamide biosynthesis. This chain is Diphthine synthase, found in Thermococcus onnurineus (strain NA1).